A 205-amino-acid chain; its full sequence is Ras-related protein rab-6.1 (205 aa).

GTP is bound by residues 18-25 (GEQSVGKT), Thr43, 66-70 (DTAGQ), and 124-127 (NKTD). 2 S-geranylgeranyl cysteine lipidation sites follow: Cys203 and Cys205. The residue at position 205 (Cys205) is a Cysteine methyl ester.

This sequence belongs to the small GTPase superfamily. Rab family. Interacts with GARP complex component vps-52. Highly expressed in body wall muscle, intestine, somatic gonad, distal tip cells, vulva, and neurons including AVB, AVD, RIG, and PVC (at protein level). Not expressed in AVA and RMDV neurons.

The protein localises to the cell membrane. It is found in the cell projection. The protein resides in the dendrite. Its subcellular location is the perikaryon. It localises to the golgi apparatus. The protein localises to the cytoplasmic vesicle. It is found in the secretory vesicle. Functionally, the small GTPases Rab are key regulators of intracellular membrane trafficking, from the formation of transport vesicles to their fusion with membranes. Rabs cycle between an inactive GDP-bound form and an active GTP-bound form that is able to recruit to membranes different set of downstream effectors directly responsible for vesicle formation, movement, tethering and fusion. In its active GTP-bound form, acts redundantly with rab-6.2 (in its active GTP-bound form) to positively regulate the retrograde trafficking of cargo molecules from endosomes to Golgi structures. Required for the retrograde trafficking of glr-1, a subunit of AMPA-type glutamate receptors (AMPRs), out of early endosomes and into the Golgi compartment in neurons. Together with rab-6.2, promotes the retrograde trafficking of mig-14 from endosomes to Golgi structures in the intestine. In oocytes, in its active GTP-bound form, involved in the membrane fusion and exocytosis of secretory vesicles (cortical granules) to play a role in the remodeling of the embryo surface following fertilization. Recruits sep-1 to cortical granules (derived from the Golgi complex) for exocytosis during the oocyte-to-embryo transition. Required for seam cell division and alae formation. Promotes spontaneous reversals in locomotion. This is Ras-related protein rab-6.1 from Caenorhabditis elegans.